We begin with the raw amino-acid sequence, 650 residues long: Acetyl-coenzyme A synthetase (650 aa).

CoA-binding positions include 189–192 (RGGK), threonine 307, and asparagine 331. ATP contacts are provided by residues 383–385 (GEP), 407–412 (DTWWQT), aspartate 496, and arginine 511. Serine 519 is a binding site for CoA. Residue arginine 522 participates in ATP binding. Mg(2+) contacts are provided by valine 533, histidine 535, and valine 538. Arginine 580 contributes to the CoA binding site. An N6-acetyllysine modification is found at lysine 605.

The protein belongs to the ATP-dependent AMP-binding enzyme family. It depends on Mg(2+) as a cofactor. Acetylated. Deacetylation by the SIR2-homolog deacetylase activates the enzyme.

The catalysed reaction is acetate + ATP + CoA = acetyl-CoA + AMP + diphosphate. In terms of biological role, catalyzes the conversion of acetate into acetyl-CoA (AcCoA), an essential intermediate at the junction of anabolic and catabolic pathways. AcsA undergoes a two-step reaction. In the first half reaction, AcsA combines acetate with ATP to form acetyl-adenylate (AcAMP) intermediate. In the second half reaction, it can then transfer the acetyl group from AcAMP to the sulfhydryl group of CoA, forming the product AcCoA. In Syntrophobacter fumaroxidans (strain DSM 10017 / MPOB), this protein is Acetyl-coenzyme A synthetase.